Consider the following 272-residue polypeptide: Large ribosomal subunit protein uL3 (272 aa).

Residues 125–146 are disordered; it reads QHIGPKSHGGGGGSQPLRQTGS.

Belongs to the universal ribosomal protein uL3 family. As to quaternary structure, part of the 50S ribosomal subunit. Forms a cluster with proteins L14 and L19.

In terms of biological role, one of the primary rRNA binding proteins, it binds directly near the 3'-end of the 23S rRNA, where it nucleates assembly of the 50S subunit. This chain is Large ribosomal subunit protein uL3, found in Metamycoplasma arthritidis (strain 158L3-1) (Mycoplasma arthritidis).